Reading from the N-terminus, the 89-residue chain is Small ribosomal subunit protein bS20 (89 aa).

Residues 1 to 12 (MANIKSAKKRAK) are compositionally biased toward basic residues. The disordered stretch occupies residues 1 to 22 (MANIKSAKKRAKQTIVRNERNT).

It belongs to the bacterial ribosomal protein bS20 family.

Binds directly to 16S ribosomal RNA. The protein is Small ribosomal subunit protein bS20 of Xanthomonas oryzae pv. oryzae (strain KACC10331 / KXO85).